The following is a 432-amino-acid chain: Probable exopolygalacturonase X (432 aa).

The first 23 residues, 1–23 (MKFSYSFVQVVSLLLSLSPSVEG), serve as a signal peptide directing secretion. N-linked (GlcNAc...) asparagine glycosylation is found at N113, N129, and N199. A PbH1 1 repeat occupies 231-252 (SDNIVIQNSVINNGDDCVSFKP). D245 functions as the Proton donor in the catalytic mechanism. C247 and C264 are joined by a disulfide. N-linked (GlcNAc...) asparagine glycosylation is found at N253 and N265. 3 PbH1 repeats span residues 254–274 (STNI…SVGS), 285–306 (VQNV…RIKV), and 327–348 (VKNI…EVTQ). Residue H268 is part of the active site. N292, N297, N329, N354, and N364 each carry an N-linked (GlcNAc...) asparagine glycan. Residues 362–394 (PSNLTISDIHFKNFRGTTSGKRDPDVGTIVCSS) form a PbH1 5 repeat. The cysteines at positions 392 and 398 are disulfide-linked.

This sequence belongs to the glycosyl hydrolase 28 family.

It is found in the secreted. The enzyme catalyses [(1-&gt;4)-alpha-D-galacturonosyl](n) + H2O = alpha-D-galacturonate + [(1-&gt;4)-alpha-D-galacturonosyl](n-1). Its function is as follows. Specific in hydrolyzing the terminal glycosidic bond of polygalacturonic acid and oligogalacturonates. The sequence is that of Probable exopolygalacturonase X (pgaX) from Neosartorya fischeri (strain ATCC 1020 / DSM 3700 / CBS 544.65 / FGSC A1164 / JCM 1740 / NRRL 181 / WB 181) (Aspergillus fischerianus).